The chain runs to 304 residues: CBY1-interacting BAR domain-containing protein 2 (304 aa).

The BAR-like stretch occupies residues 6–217 (SRDSQVRVME…EKYDLERDLL (212 aa)).

This sequence belongs to the CIBAR family. As to quaternary structure, homodimer (via BAR-like domain). Heterodimer (via BAR-like domain) with FAM92A. Interacts with CBY1. In terms of tissue distribution, restricted to certain tissues, most prominently expressed in multicilaited tissues.

The protein resides in the cytoplasm. It is found in the cytoskeleton. It localises to the microtubule organizing center. The protein localises to the centrosome. Its subcellular location is the centriole. The protein resides in the cilium basal body. Its function is as follows. May play a role in ciliogenesis. In cooperation with CBY1 may facilitate ciliogenesis likely by the recruitment and fusion of endosomal vesicles at distal appendages during early stages of ciliogenesis. This chain is CBY1-interacting BAR domain-containing protein 2, found in Homo sapiens (Human).